We begin with the raw amino-acid sequence, 667 residues long: Kelch repeat-containing protein DDB_G0274267 (667 aa).

Positions 58-98 (TDRKIELLQQLGEELEAHKQQIESNRDKSMMLIEQLNKKMN) form a coiled coil. A disordered region spans residues 248–281 (SNNNDDTDDYDNNNNNNNDNKDDFDNCENNNNGD). Kelch repeat units follow at residues 319–366 (CIYS…NFDG), 369–412 (HIYL…NGAN), 434–480 (NIYL…IYKE), 484–531 (SIYL…YDDQ), 534–582 (YIYV…SGGG), and 607–654 (IVHI…QFKN).

The polypeptide is Kelch repeat-containing protein DDB_G0274267 (Dictyostelium discoideum (Social amoeba)).